Consider the following 474-residue polypeptide: tRNA-2-methylthio-N(6)-dimethylallyladenosine synthase (474 aa).

The 118-residue stretch at 3–120 (KKLHIKTWGC…LPEMINSVRG (118 aa)) folds into the MTTase N-terminal domain. [4Fe-4S] cluster contacts are provided by C12, C49, C83, C157, C161, and C164. The Radical SAM core domain maps to 143-375 (RAEGPTAFVS…QERINQQAMA (233 aa)). A TRAM domain is found at 378 to 441 (RRMLGTVQRI…TNSLRGKVVR (64 aa)).

It belongs to the methylthiotransferase family. MiaB subfamily. Monomer. The cofactor is [4Fe-4S] cluster.

It is found in the cytoplasm. The catalysed reaction is N(6)-dimethylallyladenosine(37) in tRNA + (sulfur carrier)-SH + AH2 + 2 S-adenosyl-L-methionine = 2-methylsulfanyl-N(6)-dimethylallyladenosine(37) in tRNA + (sulfur carrier)-H + 5'-deoxyadenosine + L-methionine + A + S-adenosyl-L-homocysteine + 2 H(+). Catalyzes the methylthiolation of N6-(dimethylallyl)adenosine (i(6)A), leading to the formation of 2-methylthio-N6-(dimethylallyl)adenosine (ms(2)i(6)A) at position 37 in tRNAs that read codons beginning with uridine. The chain is tRNA-2-methylthio-N(6)-dimethylallyladenosine synthase from Citrobacter koseri (strain ATCC BAA-895 / CDC 4225-83 / SGSC4696).